We begin with the raw amino-acid sequence, 439 residues long: Damage-control phosphatase ARMT1 (439 aa).

A2 carries the N-acetylalanine modification. S4 carries the post-translational modification Phosphoserine. Residue K40 is modified to N6-acetyllysine. Residues D251 and N252 each coordinate Mn(2+). A substrate-binding site is contributed by 251 to 252 (DN). S-adenosyl-L-methionine contacts are provided by E256 and D289. D289 is a binding site for Mn(2+). Substrate-binding positions include 365–369 (DLNYR) and K402. Residues 399–402 (RTLK) carry the Subfamily III RTxK motif motif.

It belongs to the damage-control phosphatase family. Sugar phosphate phosphatase III subfamily. Mn(2+) is required as a cofactor. Requires Ni(2+) as cofactor. Automethylated.

The enzyme catalyses beta-D-fructose 1-phosphate + H2O = D-fructose + phosphate. The catalysed reaction is beta-D-fructose 6-phosphate = dihydroxyacetone + D-glyceraldehyde 3-phosphate. It carries out the reaction L-glutamyl-[protein] + S-adenosyl-L-methionine = [protein]-L-glutamate 5-O-methyl ester + S-adenosyl-L-homocysteine. Its function is as follows. Metal-dependent phosphatase that shows phosphatase activity against several substrates, including fructose-1-phosphate and fructose-6-phosphate. Its preference for fructose-1-phosphate, a strong glycating agent that causes DNA damage rather than a canonical yeast metabolite, suggests a damage-control function in hexose phosphate metabolism. Has also been shown to have O-methyltransferase activity that methylates glutamate residues of target proteins to form gamma-glutamyl methyl ester residues. Possibly methylates PCNA, suggesting it is involved in the DNA damage response. The polypeptide is Damage-control phosphatase ARMT1 (Mus musculus (Mouse)).